The following is a 533-amino-acid chain: Probable ADP-ribosylation factor-binding protein C25H2.16c (533 aa).

The VHS domain maps to 15–151; that stretch reads ATEPYAFEPD…LLSYKGYTFP (137 aa). The region spanning 178–305 is the GAT domain; the sequence is REAMSAKLQE…LLTQYDHLLE (128 aa). At Ser-320 the chain carries Phosphoserine. Positions 417-532 constitute a GAE domain; the sequence is NNFTSTCAFE…EYTGQSSIRL (116 aa).

It belongs to the GGA protein family.

The protein resides in the golgi apparatus. It localises to the trans-Golgi network. Its function is as follows. May play a role in the regulation of membrane traffic through the trans-Golgi network. In Schizosaccharomyces pombe (strain 972 / ATCC 24843) (Fission yeast), this protein is Probable ADP-ribosylation factor-binding protein C25H2.16c.